Consider the following 230-residue polypeptide: uncharacterized protein (230 aa).

10 to 34 (VVTGASSGIGEAIAKKLSQQGASIV) contacts NADP(+). Serine 139 contributes to the substrate binding site. Tyrosine 152 serves as the catalytic Proton acceptor.

It belongs to the short-chain dehydrogenases/reductases (SDR) family.

This is an uncharacterized protein from Staphylococcus epidermidis (strain ATCC 12228 / FDA PCI 1200).